The primary structure comprises 391 residues: UPF0229 protein BCA_0588 (391 aa).

Polar residues predominate over residues 1-16 (MGEENQPNYTISQENW). Disordered regions lie at residues 1 to 31 (MGEE…RHQE) and 80 to 117 (HVGQ…GDAA). The segment covering 21-31 (KGYDDQQRHQE) has biased composition (basic and acidic residues). The span at 98–115 (GSGGQKQKGPGKGQGAGD) shows a compositional bias: gly residues.

The protein belongs to the UPF0229 family.

The protein is UPF0229 protein BCA_0588 of Bacillus cereus (strain 03BB102).